Consider the following 306-residue polypeptide: tRNA pseudouridine synthase B (306 aa).

The Nucleophile role is filled by aspartate 43.

Belongs to the pseudouridine synthase TruB family. Type 1 subfamily.

It carries out the reaction uridine(55) in tRNA = pseudouridine(55) in tRNA. In terms of biological role, responsible for synthesis of pseudouridine from uracil-55 in the psi GC loop of transfer RNAs. The chain is tRNA pseudouridine synthase B from Anaplasma marginale (strain St. Maries).